Reading from the N-terminus, the 451-residue chain is Aspartate aminotransferase, mitochondrial (451 aa).

L-aspartate-binding residues include glycine 52, tryptophan 155, and asparagine 216. At lysine 286 the chain carries N6-(pyridoxal phosphate)lysine. Arginine 423 provides a ligand contact to L-aspartate.

It belongs to the class-I pyridoxal-phosphate-dependent aminotransferase family. As to quaternary structure, homodimer. It depends on pyridoxal 5'-phosphate as a cofactor.

It localises to the mitochondrion matrix. The enzyme catalyses L-aspartate + 2-oxoglutarate = oxaloacetate + L-glutamate. In terms of biological role, plays a key role in amino acid metabolism. Important for metabolite exchange between mitochondria and cytosol. The sequence is that of Aspartate aminotransferase, mitochondrial (AAT1) from Saccharomyces cerevisiae (strain ATCC 204508 / S288c) (Baker's yeast).